The sequence spans 110 residues: Acylphosphatase (110 aa).

One can recognise an Acylphosphatase-like domain in the interval 20–108; it reads RAHIFVRGKV…GEFNDFSILP (89 aa). Residues Arg-35 and Asn-53 contribute to the active site.

The protein belongs to the acylphosphatase family.

The catalysed reaction is an acyl phosphate + H2O = a carboxylate + phosphate + H(+). The sequence is that of Acylphosphatase (acyP) from Pyrobaculum calidifontis (strain DSM 21063 / JCM 11548 / VA1).